A 255-amino-acid polypeptide reads, in one-letter code: 3-deoxy-manno-octulosonate cytidylyltransferase (255 aa).

Belongs to the KdsB family.

Its subcellular location is the cytoplasm. The catalysed reaction is 3-deoxy-alpha-D-manno-oct-2-ulosonate + CTP = CMP-3-deoxy-beta-D-manno-octulosonate + diphosphate. The protein operates within nucleotide-sugar biosynthesis; CMP-3-deoxy-D-manno-octulosonate biosynthesis; CMP-3-deoxy-D-manno-octulosonate from 3-deoxy-D-manno-octulosonate and CTP: step 1/1. Its pathway is bacterial outer membrane biogenesis; lipopolysaccharide biosynthesis. Its function is as follows. Activates KDO (a required 8-carbon sugar) for incorporation into bacterial lipopolysaccharide in Gram-negative bacteria. The chain is 3-deoxy-manno-octulosonate cytidylyltransferase from Polaromonas sp. (strain JS666 / ATCC BAA-500).